Here is a 582-residue protein sequence, read N- to C-terminus: mRNA-decapping enzyme 1A (582 aa).

Position 62 is a phosphoserine (S62). Residues 132–141 show a composition bias toward basic and acidic residues; that stretch reads RSQQAARDKQ. Disordered regions lie at residues 132–154 and 172–214; these read RSQQ…DHRP and QMGD…PSGH. S142, S179, S180, S315, S319, and S334 each carry phosphoserine. Residues 173 to 196 are compositionally biased toward polar residues; sequence MGDSNISSPGLQPSTQLSNLGSTE. T348 bears the Phosphothreonine mark. S353 bears the Phosphoserine mark. Asymmetric dimethylarginine is present on R376. A Phosphothreonine modification is found at T401. A phosphoserine mark is found at S422, S522, S523, and S525. The disordered stretch occupies residues 513 to 536; it reads RSSDLERKASSPSPLTIGTPESQR. Over residues 522–533 the composition is skewed to polar residues; sequence SSPSPLTIGTPE. Phosphothreonine occurs at positions 528 and 531.

It belongs to the DCP1 family. In terms of assembly, (Microbial infection) Interacts with rotavirus A non-structural protein 2; this interaction probably plays a role in the sequestration of DCP1A in viral factories. Interacts with rotavirus A non-structural protein 5; this interaction probably plays a role in its sequestration in viral factories. Forms a complex with EDC3, DCP2, DDX6 and EDC4/HEDLS, within this complex directly interacts with EDC3. Part of a cytoplasmic complex containing proteins involved in mRNA decay, including XRN1 and LSM1. Interacts with DCP1B. Interacts with DCP2. Interacts with DDX17 in an RNA-independent manner. Interacts with PNRC2. Interacts with SMAD4. Interacts with UPF1. Interacts with ZC3HAV1. Interacts with ZFP36L1. Interacts with NBDY. Interacts with DHX34; the interaction is RNA-independent. Detected in heart, brain, placenta, lung, skeletal muscle, liver, kidney and pancreas.

It is found in the cytoplasm. The protein resides in the P-body. The protein localises to the nucleus. The enzyme catalyses a 5'-end (N(7)-methyl 5'-triphosphoguanosine)-ribonucleoside in mRNA + H2O = N(7)-methyl-GDP + a 5'-end phospho-ribonucleoside in mRNA + 2 H(+). Functionally, necessary for the degradation of mRNAs, both in normal mRNA turnover and in nonsense-mediated mRNA decay. Removes the 7-methyl guanine cap structure from mRNA molecules, yielding a 5'-phosphorylated mRNA fragment and 7m-GDP. Contributes to the transactivation of target genes after stimulation by TGFB1. Essential for embryonic development. This chain is mRNA-decapping enzyme 1A (DCP1A), found in Homo sapiens (Human).